We begin with the raw amino-acid sequence, 156 residues long: Succinate dehydrogenase [ubiquinone] cytochrome b small subunit 1, mitochondrial (156 aa).

The transit peptide at 1–25 (MLSAVRRAIPLSARILRTSLIQRCA) directs the protein to the mitochondrion. The Mitochondrial matrix portion of the chain corresponds to 26–59 (GATSAAVTGAAPPQFDPIAAEKGFKPLHSHGTLF). A helical transmembrane segment spans residues 60-78 (KIERYFAAAMVPLIPAAYF). Residues 79 to 83 (IHGRE) are Mitochondrial intermembrane-facing. A helical membrane pass occupies residues 84 to 104 (MDLCLALALTLHVHWGVWGVV). A heme b-binding site is contributed by H95. Over 105-119 (NDYGRPFVLGDTLAA) the chain is Mitochondrial matrix. Y107 lines the a rhodoquinol pocket. Residues 120 to 141 (AVRVGAYIFTACLLAGLLYFNE) form a helical membrane-spanning segment. Residues 142-156 (HDVGLTRAFEMVWEL) lie on the Mitochondrial intermembrane side of the membrane.

Belongs to the CybS family. As to quaternary structure, component of the mitochondrial electron transport chain complex II composed of four subunits: a flavoprotein (Fp), an iron-sulfur protein (Ip), and a large cytochrome b (CybL) subunit and a small cytochrome b (CybS) subunit. There are 2 developmental stage-specific forms of complex II which have the Ip and CybL subunits in common. Complex II from the free-living larvae (aerobic environment) acts as a succinate dehydrogenase and is composed of the common subunit Ip and CybL and the stage specific subunits FpL and CybSL. Complex II from parasitic larvae and adults (anaerobic environment) acts as a fumarate reductase and is composed of the common subunit Ip and CybL and the stage specific subunits FpA and CybSA. Heme b serves as cofactor. In terms of tissue distribution, expressed in adult muscles (at protein level).

The protein resides in the mitochondrion inner membrane. In terms of biological role, membrane-bound small subunit (CybS) of the mitochondrial electron transport chain complex II, which together with the membrane-bound large subunit (CybL), anchor the catalytic subunits to the inner mitochondria membrane. During the parasitic larvae and adult stages, which occur in an anaerobic environment, complex II acts as a fumarate reductase by transferring electrons from rhodoquinol to fumarate. In Ascaris suum (Pig roundworm), this protein is Succinate dehydrogenase [ubiquinone] cytochrome b small subunit 1, mitochondrial.